The sequence spans 386 residues: Synaptotagmin-5 (386 aa).

Positions 1–16 are enriched in pro residues; that stretch reads MFPEPPTPGPPSPDTP. The interval 1–23 is disordered; that stretch reads MFPEPPTPGPPSPDTPPDSSRIS. Topologically, residues 1-24 are vesicular; the sequence is MFPEPPTPGPPSPDTPPDSSRISH. The helical transmembrane segment at 25-45 threads the bilayer; sequence GPVPPWALATIVLVSGLLIFS. The Cytoplasmic portion of the chain corresponds to 46-386; that stretch reads CCFCLYRKSC…PDRVRLLPAP (341 aa). 2 consecutive C2 domains span residues 108–227 and 239–372; these read ELGR…QAWR and KLGD…AQWH. Ca(2+)-binding residues include Leu138, Asp139, Asp145, Asp197, Phe198, Asp199, Ser202, Asp205, Asp270, Asp276, Asp330, and Asp332.

The protein belongs to the synaptotagmin family. As to quaternary structure, homodimer. Interacts with both alpha- and beta-tubulin. It depends on Ca(2+) as a cofactor.

The protein localises to the cytoplasmic vesicle. It localises to the secretory vesicle. It is found in the synaptic vesicle membrane. Its subcellular location is the recycling endosome membrane. May be involved in Ca(2+)-dependent exocytosis of secretory vesicles through Ca(2+) and phospholipid binding to the C2 domain or may serve as Ca(2+) sensors in the process of vesicular trafficking and exocytosis. Regulates the Ca(2+)-dependent secretion of norepinephrine in PC12 cells. Required for export from the endocytic recycling compartment to the cell surface. This is Synaptotagmin-5 (SYT5) from Homo sapiens (Human).